Reading from the N-terminus, the 186-residue chain is Probable chorismate pyruvate-lyase (186 aa).

Positions 80, 118, and 170 each coordinate substrate.

The protein belongs to the UbiC family.

Its subcellular location is the cytoplasm. It catalyses the reaction chorismate = 4-hydroxybenzoate + pyruvate. The protein operates within cofactor biosynthesis; ubiquinone biosynthesis. Removes the pyruvyl group from chorismate, with concomitant aromatization of the ring, to provide 4-hydroxybenzoate (4HB) for the ubiquinone pathway. This chain is Probable chorismate pyruvate-lyase, found in Pseudomonas syringae pv. syringae (strain B728a).